We begin with the raw amino-acid sequence, 314 residues long: Transcriptional regulatory protein GlnL (314 aa).

The Response regulatory domain maps to 2–118 (RFFIADDDRA…EIVTVLQKVK (117 aa)). Position 54 is a 4-aspartylphosphate (aspartate 54).

In terms of processing, phosphorylated by GlnK.

It localises to the cytoplasm. Functionally, member of the two-component regulatory system GlnL/GlnK that positively regulates the expression of the glsA-glnT operon in response to glutamine. GlnL binds the promoter region of glsA-glnT in vitro. The polypeptide is Transcriptional regulatory protein GlnL (glnL) (Bacillus subtilis (strain 168)).